Reading from the N-terminus, the 140-residue chain is GTP-dependent dephospho-CoA kinase (140 aa).

D21, V22, V23, D40, K42, and E92 together coordinate GTP.

This sequence belongs to the GTP-dependent DPCK family.

The catalysed reaction is 3'-dephospho-CoA + GTP = GDP + CoA + H(+). The protein operates within cofactor biosynthesis; coenzyme A biosynthesis. Catalyzes the GTP-dependent phosphorylation of the 3'-hydroxyl group of dephosphocoenzyme A to form coenzyme A (CoA). In Pyrobaculum aerophilum (strain ATCC 51768 / DSM 7523 / JCM 9630 / CIP 104966 / NBRC 100827 / IM2), this protein is GTP-dependent dephospho-CoA kinase.